The sequence spans 339 residues: Dihydroorotate dehydrogenase (quinone) (339 aa).

Residues 62 to 66 (AGMDK) and threonine 86 contribute to the FMN site. Position 66 (lysine 66) interacts with substrate. 111–115 (NRMGF) provides a ligand contact to substrate. FMN-binding residues include asparagine 139 and asparagine 172. Asparagine 172 provides a ligand contact to substrate. Serine 175 acts as the Nucleophile in catalysis. Asparagine 177 contacts substrate. The FMN site is built by lysine 217 and threonine 245. Position 246 to 247 (246 to 247 (NT)) interacts with substrate. FMN-binding positions include glycine 268, glycine 297, and 318 to 319 (YS).

Belongs to the dihydroorotate dehydrogenase family. Type 2 subfamily. In terms of assembly, monomer. The cofactor is FMN.

It localises to the cell membrane. The catalysed reaction is (S)-dihydroorotate + a quinone = orotate + a quinol. It functions in the pathway pyrimidine metabolism; UMP biosynthesis via de novo pathway; orotate from (S)-dihydroorotate (quinone route): step 1/1. In terms of biological role, catalyzes the conversion of dihydroorotate to orotate with quinone as electron acceptor. This Shewanella putrefaciens (strain CN-32 / ATCC BAA-453) protein is Dihydroorotate dehydrogenase (quinone).